Consider the following 361-residue polypeptide: Epoxyqueuosine reductase (361 aa).

Catalysis depends on Asp-147, which acts as the Proton donor. The 30-residue stretch at 193 to 222 folds into the 4Fe-4S ferredoxin-type domain; it reads VDPAMDSEHCGRCSACLDICPTAAFVGPYR. [4Fe-4S] cluster is bound by residues Cys-202, Cys-205, Cys-208, Cys-212, Cys-228, Cys-255, Cys-258, and Cys-262.

This sequence belongs to the QueG family. As to quaternary structure, monomer. Cob(II)alamin is required as a cofactor. The cofactor is [4Fe-4S] cluster.

The protein localises to the cytoplasm. It carries out the reaction epoxyqueuosine(34) in tRNA + AH2 = queuosine(34) in tRNA + A + H2O. Its pathway is tRNA modification; tRNA-queuosine biosynthesis. Catalyzes the conversion of epoxyqueuosine (oQ) to queuosine (Q), which is a hypermodified base found in the wobble positions of tRNA(Asp), tRNA(Asn), tRNA(His) and tRNA(Tyr). The polypeptide is Epoxyqueuosine reductase (Pseudomonas aeruginosa (strain ATCC 15692 / DSM 22644 / CIP 104116 / JCM 14847 / LMG 12228 / 1C / PRS 101 / PAO1)).